We begin with the raw amino-acid sequence, 1316 residues long: DNA-directed RNA polymerase subunit beta' (1316 aa).

Zn(2+) contacts are provided by Cys60, Cys62, Cys75, and Cys78. Positions 183 to 209 (ELEEEGAKSDVRRKVRDGGEREMRQLR) are disordered. Mg(2+)-binding residues include Asp535, Asp537, and Asp539. Zn(2+) contacts are provided by Cys890, Cys966, Cys973, and Cys976.

It belongs to the RNA polymerase beta' chain family. The RNAP catalytic core consists of 2 alpha, 1 beta, 1 beta' and 1 omega subunit. When a sigma factor is associated with the core the holoenzyme is formed, which can initiate transcription. Requires Mg(2+) as cofactor. Zn(2+) is required as a cofactor.

It carries out the reaction RNA(n) + a ribonucleoside 5'-triphosphate = RNA(n+1) + diphosphate. Functionally, DNA-dependent RNA polymerase catalyzes the transcription of DNA into RNA using the four ribonucleoside triphosphates as substrates. This is DNA-directed RNA polymerase subunit beta' from Mycolicibacterium gilvum (strain PYR-GCK) (Mycobacterium gilvum (strain PYR-GCK)).